The sequence spans 277 residues: Ribosomal RNA small subunit methyltransferase A (277 aa).

S-adenosyl-L-methionine-binding residues include H20, L22, G47, E71, D94, and N116.

This sequence belongs to the class I-like SAM-binding methyltransferase superfamily. rRNA adenine N(6)-methyltransferase family. RsmA subfamily.

It localises to the cytoplasm. It carries out the reaction adenosine(1518)/adenosine(1519) in 16S rRNA + 4 S-adenosyl-L-methionine = N(6)-dimethyladenosine(1518)/N(6)-dimethyladenosine(1519) in 16S rRNA + 4 S-adenosyl-L-homocysteine + 4 H(+). Specifically dimethylates two adjacent adenosines (A1518 and A1519) in the loop of a conserved hairpin near the 3'-end of 16S rRNA in the 30S particle. May play a critical role in biogenesis of 30S subunits. In Burkholderia sp, this protein is Ribosomal RNA small subunit methyltransferase A.